We begin with the raw amino-acid sequence, 213 residues long: Adenylate kinase (213 aa).

Residue 10–15 participates in ATP binding; the sequence is GSGKGT. The segment at 30 to 59 is NMP; the sequence is SVGDLLRNIISSSSELGKKIKGTVESGNLI. Residues Arg-36, 57 to 59, 83 to 86, and Gln-90 contribute to the AMP site; these read NLI and GFPR. The LID stretch occupies residues 125–160; sequence NRLACLDCKNIYSVSSFKSTTCAKCKSTRLEKRIDD. Residue Arg-126 coordinates ATP. The Zn(2+) site is built by Cys-129 and Cys-132. 135–136 is an ATP binding site; sequence IY. Zn(2+) contacts are provided by Cys-146 and Cys-149. Residues Arg-157 and Arg-169 each coordinate AMP. Leu-195 is an ATP binding site.

It belongs to the adenylate kinase family. As to quaternary structure, monomer.

It localises to the cytoplasm. It catalyses the reaction AMP + ATP = 2 ADP. It participates in purine metabolism; AMP biosynthesis via salvage pathway; AMP from ADP: step 1/1. In terms of biological role, catalyzes the reversible transfer of the terminal phosphate group between ATP and AMP. Plays an important role in cellular energy homeostasis and in adenine nucleotide metabolism. In Wolbachia pipientis wMel, this protein is Adenylate kinase.